Consider the following 140-residue polypeptide: Nucleoside diphosphate kinase (140 aa).

6 residues coordinate ATP: Lys-11, Phe-59, Arg-87, Thr-93, Arg-104, and Asn-114. Catalysis depends on His-117, which acts as the Pros-phosphohistidine intermediate.

It belongs to the NDK family. In terms of assembly, homotetramer. It depends on Mg(2+) as a cofactor.

It is found in the cytoplasm. The enzyme catalyses a 2'-deoxyribonucleoside 5'-diphosphate + ATP = a 2'-deoxyribonucleoside 5'-triphosphate + ADP. The catalysed reaction is a ribonucleoside 5'-diphosphate + ATP = a ribonucleoside 5'-triphosphate + ADP. Its function is as follows. Major role in the synthesis of nucleoside triphosphates other than ATP. The ATP gamma phosphate is transferred to the NDP beta phosphate via a ping-pong mechanism, using a phosphorylated active-site intermediate. In Methylobacterium radiotolerans (strain ATCC 27329 / DSM 1819 / JCM 2831 / NBRC 15690 / NCIMB 10815 / 0-1), this protein is Nucleoside diphosphate kinase.